The primary structure comprises 691 residues: Elongation factor G (691 aa).

One can recognise a tr-type G domain in the interval 8-283; it reads EDYRNFGIMA…AVVDYLPTPI (276 aa). GTP-binding positions include 17–24, 81–85, and 135–138; these read AHIDAGKT, DTPGH, and NKMD.

Belongs to the TRAFAC class translation factor GTPase superfamily. Classic translation factor GTPase family. EF-G/EF-2 subfamily.

It localises to the cytoplasm. Catalyzes the GTP-dependent ribosomal translocation step during translation elongation. During this step, the ribosome changes from the pre-translocational (PRE) to the post-translocational (POST) state as the newly formed A-site-bound peptidyl-tRNA and P-site-bound deacylated tRNA move to the P and E sites, respectively. Catalyzes the coordinated movement of the two tRNA molecules, the mRNA and conformational changes in the ribosome. The sequence is that of Elongation factor G from Beijerinckia indica subsp. indica (strain ATCC 9039 / DSM 1715 / NCIMB 8712).